The following is a 504-amino-acid chain: D-alanine--D-alanyl carrier protein ligase (504 aa).

Residue 152–153 (TS) participates in ATP binding. Position 197 (Asp197) interacts with D-alanine. ATP is bound at residue 292–297 (NTYGPT). Residue Val301 coordinates D-alanine. ATP-binding positions include Asp383, 394 to 397 (YNGR), and Lys492. Lys492 is a D-alanine binding site.

The protein belongs to the ATP-dependent AMP-binding enzyme family. DltA subfamily.

The protein localises to the cytoplasm. It carries out the reaction holo-[D-alanyl-carrier protein] + D-alanine + ATP = D-alanyl-[D-alanyl-carrier protein] + AMP + diphosphate. Its pathway is cell wall biogenesis; lipoteichoic acid biosynthesis. In terms of biological role, catalyzes the first step in the D-alanylation of lipoteichoic acid (LTA), the activation of D-alanine and its transfer onto the D-alanyl carrier protein (Dcp) DltC. In an ATP-dependent two-step reaction, forms a high energy D-alanyl-AMP intermediate, followed by transfer of the D-alanyl residue as a thiol ester to the phosphopantheinyl prosthetic group of the Dcp. D-alanylation of LTA plays an important role in modulating the properties of the cell wall in Gram-positive bacteria, influencing the net charge of the cell wall. The chain is D-alanine--D-alanyl carrier protein ligase from Bacillus cytotoxicus (strain DSM 22905 / CIP 110041 / 391-98 / NVH 391-98).